The primary structure comprises 215 residues: S-crystallin 2 (215 aa).

The 79-residue stretch at proline 2 to glycine 80 folds into the GST N-terminal domain. Residues asparagine 82 to phenylalanine 215 enclose the GST C-terminal domain.

It belongs to the GST superfamily. In terms of tissue distribution, lens.

Functionally, S-crystallins are structural components of squids and octopi eye lens. Contains relatively little GST activity (1/1000 of that of mammalian GST enzyme). The chain is S-crystallin 2 (OCTS2) from Octopus vulgaris (Common octopus).